Reading from the N-terminus, the 310-residue chain is UPF0324 membrane protein VP0936 (310 aa).

The next 10 helical transmembrane spans lie at 7–29 (PFGL…LVIG), 44–63 (IASF…GFGI), 75–94 (GIGL…SLIA), 104–126 (AYLI…APAI), 133–155 (IGLA…PVIG), 165–187 (FGTW…SAYG), 199–218 (LARA…IFSR), 228–250 (LVIP…FPQL), 257–279 (IFTI…ISIS), and 289–308 (LLFG…SWLV).

It belongs to the UPF0324 family.

It is found in the cell membrane. The protein is UPF0324 membrane protein VP0936 of Vibrio parahaemolyticus serotype O3:K6 (strain RIMD 2210633).